A 919-amino-acid chain; its full sequence is Sarcosine dehydrogenase, mitochondrial (919 aa).

The transit peptide at 1–22 (MASLSRVLRVAATCPRGRAAWN) directs the protein to the mitochondrion. K38 carries the post-translational modification N6-succinyllysine. H109 carries the tele-8alpha-FAD histidine modification. K174 bears the N6-acetyllysine; alternate mark. The residue at position 174 (K174) is an N6-succinyllysine; alternate. 4 positions are modified to N6-succinyllysine: K278, K378, K392, and K535. N6-acetyllysine is present on residues K560 and K776. At Y778 the chain carries Phosphotyrosine. K803, K885, and K905 each carry N6-acetyllysine; alternate. N6-succinyllysine; alternate is present on residues K803, K885, and K905.

The protein belongs to the GcvT family. FAD is required as a cofactor.

The protein resides in the mitochondrion matrix. The enzyme catalyses (6S)-5,6,7,8-tetrahydrofolyl-(gamma-L-Glu)(n) + sarcosine + oxidized [electron-transfer flavoprotein] + H(+) = (6R)-5,10-methylenetetrahydrofolyl-(gamma-L-Glu)(n) + reduced [electron-transfer flavoprotein] + glycine. It functions in the pathway amine and polyamine degradation; sarcosine degradation; formaldehyde and glycine from sarcosine: step 1/1. In terms of biological role, catalyzes the last step of the oxidative degradation of choline to glycine. Converts sarcosine into glycine. The protein is Sarcosine dehydrogenase, mitochondrial of Mus musculus (Mouse).